A 246-amino-acid polypeptide reads, in one-letter code: Deoxycytidylate 5-hydroxymethyltransferase (246 aa).

Residue Cys148 is part of the active site.

This sequence belongs to the thymidylate synthase family.

The catalysed reaction is dCMP + (6R)-5,10-methylene-5,6,7,8-tetrahydrofolate + H2O = 5-hydroxymethyl-dCMP + (6S)-5,6,7,8-tetrahydrofolate. This is Deoxycytidylate 5-hydroxymethyltransferase (42) from Escherichia coli (Bacteriophage T2).